The primary structure comprises 204 residues: Acyl-homoserine-lactone synthase (204 aa).

It belongs to the autoinducer synthase family.

It carries out the reaction a fatty acyl-[ACP] + S-adenosyl-L-methionine = an N-acyl-L-homoserine lactone + S-methyl-5'-thioadenosine + holo-[ACP] + H(+). Its function is as follows. Required for the synthesis of acyl-HSL autoinducers that bind to SolR. The polypeptide is Acyl-homoserine-lactone synthase (solI) (Ralstonia nicotianae (strain ATCC BAA-1114 / GMI1000) (Ralstonia solanacearum)).